The sequence spans 254 residues: Major prion protein (254 aa).

An N-terminal signal peptide occupies residues 1 to 22; sequence MANLGYWLLALFVATWTDVGLC. An interaction with GRB2, ERI3 and SYN1 region spans residues 23 to 231; sequence KKRPKPGGWN…SQAYYDGRRS (209 aa). Residues 25-107 form a disordered region; the sequence is RPKPGGWNTG…QWNKPSKPKT (83 aa). Tandem repeats lie at residues 51 to 59, 60 to 67, 68 to 75, 76 to 83, and 84 to 91. The segment at 51-91 is 5 X 8 AA tandem repeats of P-H-G-G-G-W-G-Q; sequence PQGGGTWGQPHGGGWGQPHGGGWGQPHGGGWGQPHGGGWGQ. Residues 52-95 show a composition bias toward gly residues; it reads QGGGTWGQPHGGGWGQPHGGGWGQPHGGGWGQPHGGGWGQGGGT. 12 residues coordinate Cu(2+): His61, Gly62, Gly63, His69, Gly70, Gly71, His77, Gly78, Gly79, His85, Gly86, and Gly87. Residues Cys179 and Cys214 are joined by a disulfide bond. N-linked (GlcNAc...) asparagine glycosylation is found at Asn181 and Asn197. Ser231 carries GPI-anchor amidated serine lipidation. A propeptide spans 232–254 (removed in mature form); the sequence is SAVLFSSPPMILLISFLIFLIVG.

It belongs to the prion family. In terms of assembly, monomer and homodimer. Has a tendency to aggregate into amyloid fibrils containing a cross-beta spine, formed by a steric zipper of superposed beta-strands. Soluble oligomers may represent an intermediate stage on the path to fibril formation. Copper binding may promote oligomerization. Interacts with GRB2, APP, ERI3/PRNPIP and SYN1. Mislocalized cytosolically exposed PrP interacts with MGRN1; this interaction alters MGRN1 subcellular location and causes lysosomal enlargement. Interacts with KIAA1191.

It localises to the cell membrane. The protein localises to the golgi apparatus. Its function is as follows. Its primary physiological function is unclear. Has cytoprotective activity against internal or environmental stresses. May play a role in neuronal development and synaptic plasticity. May be required for neuronal myelin sheath maintenance. May play a role in iron uptake and iron homeostasis. Soluble oligomers are toxic to cultured neuroblastoma cells and induce apoptosis (in vitro). Association with GPC1 (via its heparan sulfate chains) targets PRNP to lipid rafts. Also provides Cu(2+) or Zn(2+) for the ascorbate-mediated GPC1 deaminase degradation of its heparan sulfate side chains. The chain is Major prion protein (PRNP) from Sigmodon hispidus (Hispid cotton rat).